The sequence spans 132 residues: Ribosome-binding factor A (132 aa).

Positions 113 to 132 (EANSTRAKDDDEADTPAKDD) are disordered.

This sequence belongs to the RbfA family. As to quaternary structure, monomer. Binds 30S ribosomal subunits, but not 50S ribosomal subunits or 70S ribosomes.

Its subcellular location is the cytoplasm. Functionally, one of several proteins that assist in the late maturation steps of the functional core of the 30S ribosomal subunit. Associates with free 30S ribosomal subunits (but not with 30S subunits that are part of 70S ribosomes or polysomes). Required for efficient processing of 16S rRNA. May interact with the 5'-terminal helix region of 16S rRNA. This chain is Ribosome-binding factor A, found in Burkholderia cenocepacia (strain HI2424).